A 1338-amino-acid polypeptide reads, in one-letter code: MFLMPTSSELNSGQNFLTQWMTNPSRAGVILNRGFPILEADKEKRAAVDISTSFPIKGTHFSDSFSFINEEDSLLEEQKLESNNPYKPQSDKSETHTAFPCIKKGPQVAACHSAPGHQEENKNDFIPDLASEFKEGAYKDPLFKKLEQLKEVQQKKQEQLKRQQLEQLQRLMEEQEKLLTMVSGQCTLPGLSLLPDDQSQKHRSPGNTTTGERATCCFPSYVYPDPTQEETYPSNILSHEQSNFCRTAHGDFVLTSKRASPNLFSEAQYQEAPVEKNNLKEENRNHPTGESILCWEKVTEQIQEANDKNLQKHDDSSEVANIEERPIKAAIGERKQTFEDYLEEQIQLEEQELKQKQLKEAEGPLPIKAKPKQPFLKRGEGLARFTNAKSKFQKGKESKLVTNQSTSEDQPLFKMDRQQLQRKTALKNKELCADNPILKKDSKARTKSGSVTLSQKPKMLKCSNRKSLSPSGLKIQTGKKCDGQFRDQIKFENKVTSNNKENVTECPKPCDTGCTGWNKTQGKDRLPLSTGPASRLAAKSPIRETMKESESSLDVSLQKKLETWEREKEKENLELDEFLFLEQAADEISFSSNSSFVLKILERDQQICKGHRMSSTPVKAVPQKTNPADPISHCNRSEDLDHTAREKESECEVAPKQLHSLSSADELREQPCKIRKAVQKSTSENQTEWNARDDEGVPNSDSSTDSEEQLDVTIKPSTEDRERGISSREDSPQVCDDKGPFKDTRTQEDKRRDVDLDLSDKDYSSDESIMESIKHKVSEPSRSSSLSLSKMDFDDERTWTDLEENLCNHDVVLGNESTYGTPQTCYPNNEIGILDKTIKRKIAPVKRGEDLSKSRRSRSPPTSELMMKFFPSLKPKPKSDSHLGNELKLNISQDQPPGDNARSQVLREKIIELETEIEKFKAENASLAKLRIERESALEKLRKEIADFEQQKAKELARIEEFKKEEMRKLQKERKVFEKYTTAARTFPDKKEREEIQTLKQQIADLREDLKRKETKWSSTHSRLRSQIQMLVRENTDLREEIKVMERFRLDAWKRAEAIESSLEVEKKDKLANTSVRFQNSQISSGTQVEKYKKNYLPMQGNPPRRSKSAPPRDLGNLDKGQAASPREPLEPLNFPDPEYKEEEEDQDIQGEISHPDGKVEKVYKNGCRVILFPNGTRKEVSADGKTITVTFFNGDVKQVMPDQRVIYYYAAAQTTHTTYPEGLEVLHFSSGQIEKHYPDGRKEITFPDQTVKNLFPDGQEESIFPDGTIVRVQRDGNKLIEFNNGQRELHTAQFKRREYPDGTVKTVYANGHQETKYRSGRIRVKDKEGNVLMDTEL.

The segment at 190–211 is disordered; that stretch reads GLSLLPDDQSQKHRSPGNTTTG. Phosphoserine is present on residues serine 260 and serine 316. Residues 319–394 form an alpha/beta-tubulin binding region; the sequence is VANIEERPIK…FTNAKSKFQK (76 aa). 3 disordered regions span residues 386–414, 436–479, and 521–551; these read TNAKSKFQKGKESKLVTNQSTSEDQPLFK, PILK…QTGK, and QGKDRLPLSTGPASRLAAKSPIRETMKESES. The span at 400-409 shows a compositional bias: polar residues; that stretch reads LVTNQSTSED. The residue at position 540 (serine 540) is a Phosphoserine. Basic and acidic residues predominate over residues 541-550; sequence PIRETMKESE. Serine 589 bears the Phosphoserine; by PLK2 mark. Serine 595 bears the Phosphoserine; by PLK2 and PLK4 mark. Disordered stretches follow at residues 611–789, 845–865, and 1096–1153; these read HRMS…LSLS, VKRGEDLSKSRRSRSPPTSEL, and YLPM…QGEI. The segment covering 635 to 650 has biased composition (basic and acidic residues); sequence NRSEDLDHTAREKESE. Over residues 679–689 the composition is skewed to polar residues; the sequence is QKSTSENQTEW. The segment covering 717–764 has biased composition (basic and acidic residues); it reads STEDRERGISSREDSPQVCDDKGPFKDTRTQEDKRRDVDLDLSDKDYS. Residue serine 759 is modified to Phosphoserine. The interaction with STIL stretch occupies residues 895 to 1338; sequence QPPGDNARSQ…EGNVLMDTEL (444 aa). The segment covering 1140 to 1149 has biased composition (acidic residues); sequence YKEEEEDQDI.

It belongs to the TCP10 family. In terms of assembly, forms homodimers. Associates with microtubules plus ends; binds to beta-tubulin subunits exposed on microtubule outer surface at its distal tip; also associates with microtubule lattice. Associated with the gamma-tubulin complex. Interacts with the head domain of EPB41. Interacts with LYST. Interacts with CEP152 (via C-terminus). Interacts with STIL. Forms a complex with STIL and SASS6. Phosphorylation at Ser-589 and Ser-595 by PLK2 is required for procentriole formation and centriole elongation. Phosphorylation by PLK2 oscillates during the cell cycle: it increases at G1/S transition and decreases during the exit from mitosis. Phosphorylation at Ser-595 is also mediated by PLK4 but is not a critical step in PLK4 function in procentriole assembly.

Its subcellular location is the cytoplasm. It is found in the cytoskeleton. The protein localises to the microtubule organizing center. The protein resides in the centrosome. It localises to the centriole. Functionally, plays an important role in cell division and centrosome function by participating in centriole duplication. Inhibits microtubule nucleation from the centrosome. Involved in the regulation of slow processive growth of centriolar microtubules. Acts as a microtubule plus-end tracking protein that stabilizes centriolar microtubules and inhibits microtubule polymerization and extension from the distal ends of centrioles. Required for centriole elongation and for STIL-mediated centriole amplification. Required for the recruitment of CEP295 to the proximal end of new-born centrioles at the centriolar microtubule wall during early S phase in a PLK4-dependent manner. May be involved in the control of centriolar-microtubule growth by acting as a regulator of tubulin release. This chain is Centrosomal P4.1-associated protein, found in Homo sapiens (Human).